Consider the following 194-residue polypeptide: Nucleoside triphosphate pyrophosphatase (194 aa).

Asp-71 acts as the Proton acceptor in catalysis.

Belongs to the Maf family. Requires a divalent metal cation as cofactor.

The protein resides in the cytoplasm. It carries out the reaction a ribonucleoside 5'-triphosphate + H2O = a ribonucleoside 5'-phosphate + diphosphate + H(+). It catalyses the reaction a 2'-deoxyribonucleoside 5'-triphosphate + H2O = a 2'-deoxyribonucleoside 5'-phosphate + diphosphate + H(+). In terms of biological role, nucleoside triphosphate pyrophosphatase. May have a dual role in cell division arrest and in preventing the incorporation of modified nucleotides into cellular nucleic acids. This chain is Nucleoside triphosphate pyrophosphatase, found in Paramagnetospirillum magneticum (strain ATCC 700264 / AMB-1) (Magnetospirillum magneticum).